The sequence spans 139 residues: 6,7-dimethyl-8-ribityllumazine synthase (139 aa).

5-amino-6-(D-ribitylamino)uracil is bound by residues phenylalanine 13, 45–47 (VFD), and 69–71 (AVI). Residue 74 to 75 (AT) participates in (2S)-2-hydroxy-3-oxobutyl phosphate binding. Histidine 77 functions as the Proton donor in the catalytic mechanism. Leucine 102 provides a ligand contact to 5-amino-6-(D-ribitylamino)uracil. Arginine 117 is a (2S)-2-hydroxy-3-oxobutyl phosphate binding site.

The protein belongs to the DMRL synthase family.

The catalysed reaction is (2S)-2-hydroxy-3-oxobutyl phosphate + 5-amino-6-(D-ribitylamino)uracil = 6,7-dimethyl-8-(1-D-ribityl)lumazine + phosphate + 2 H2O + H(+). The protein operates within cofactor biosynthesis; riboflavin biosynthesis; riboflavin from 2-hydroxy-3-oxobutyl phosphate and 5-amino-6-(D-ribitylamino)uracil: step 1/2. Its function is as follows. Catalyzes the formation of 6,7-dimethyl-8-ribityllumazine by condensation of 5-amino-6-(D-ribitylamino)uracil with 3,4-dihydroxy-2-butanone 4-phosphate. This is the penultimate step in the biosynthesis of riboflavin. In Methanothermobacter thermautotrophicus (strain ATCC 29096 / DSM 1053 / JCM 10044 / NBRC 100330 / Delta H) (Methanobacterium thermoautotrophicum), this protein is 6,7-dimethyl-8-ribityllumazine synthase.